Reading from the N-terminus, the 298-residue chain is Glutamyl-Q tRNA(Asp) synthetase (298 aa).

L-glutamate contacts are provided by residues 8 to 12 (RFAPS) and Glu-44. Positions 11-21 (PSPTGPLHFGS) match the 'HIGH' region motif. Cys-100, Cys-102, Tyr-123, and Cys-127 together coordinate Zn(2+). L-glutamate-binding residues include Tyr-183 and Arg-201. The 'KMSKS' region motif lies at 239-243 (KLSKQ). Lys-242 provides a ligand contact to ATP.

This sequence belongs to the class-I aminoacyl-tRNA synthetase family. GluQ subfamily. The cofactor is Zn(2+).

Its function is as follows. Catalyzes the tRNA-independent activation of glutamate in presence of ATP and the subsequent transfer of glutamate onto a tRNA(Asp). Glutamate is transferred on the 2-amino-5-(4,5-dihydroxy-2-cyclopenten-1-yl) moiety of the queuosine in the wobble position of the QUC anticodon. This is Glutamyl-Q tRNA(Asp) synthetase from Burkholderia cenocepacia (strain ATCC BAA-245 / DSM 16553 / LMG 16656 / NCTC 13227 / J2315 / CF5610) (Burkholderia cepacia (strain J2315)).